A 460-amino-acid chain; its full sequence is Bifunctional protein GlmU (460 aa).

A pyrophosphorylase region spans residues 1–235; it reads MTLTAAIVLA…PLSVEGVNDR (235 aa). Residues 9–12, K23, Q76, and 81–82 contribute to the UDP-N-acetyl-alpha-D-glucosamine site; these read LAAG and GT. D109 contacts Mg(2+). UDP-N-acetyl-alpha-D-glucosamine-binding residues include G146, E161, N176, and N233. N233 contacts Mg(2+). Positions 236–256 are linker; the sequence is VQLASLAKAHNLRVCRQWMLD. Positions 257 to 460 are N-acetyltransferase; that stretch reads GVTIVDPQTT…VDNWKPAWER (204 aa). Residues R338 and K356 each coordinate UDP-N-acetyl-alpha-D-glucosamine. H368 functions as the Proton acceptor in the catalytic mechanism. Y371 and N382 together coordinate UDP-N-acetyl-alpha-D-glucosamine. Acetyl-CoA is bound by residues 391 to 392 and A428; that span reads NY.

The protein in the N-terminal section; belongs to the N-acetylglucosamine-1-phosphate uridyltransferase family. This sequence in the C-terminal section; belongs to the transferase hexapeptide repeat family. As to quaternary structure, homotrimer. Mg(2+) is required as a cofactor.

It is found in the cytoplasm. It catalyses the reaction alpha-D-glucosamine 1-phosphate + acetyl-CoA = N-acetyl-alpha-D-glucosamine 1-phosphate + CoA + H(+). The enzyme catalyses N-acetyl-alpha-D-glucosamine 1-phosphate + UTP + H(+) = UDP-N-acetyl-alpha-D-glucosamine + diphosphate. It functions in the pathway nucleotide-sugar biosynthesis; UDP-N-acetyl-alpha-D-glucosamine biosynthesis; N-acetyl-alpha-D-glucosamine 1-phosphate from alpha-D-glucosamine 6-phosphate (route II): step 2/2. Its pathway is nucleotide-sugar biosynthesis; UDP-N-acetyl-alpha-D-glucosamine biosynthesis; UDP-N-acetyl-alpha-D-glucosamine from N-acetyl-alpha-D-glucosamine 1-phosphate: step 1/1. The protein operates within bacterial outer membrane biogenesis; LPS lipid A biosynthesis. Functionally, catalyzes the last two sequential reactions in the de novo biosynthetic pathway for UDP-N-acetylglucosamine (UDP-GlcNAc). The C-terminal domain catalyzes the transfer of acetyl group from acetyl coenzyme A to glucosamine-1-phosphate (GlcN-1-P) to produce N-acetylglucosamine-1-phosphate (GlcNAc-1-P), which is converted into UDP-GlcNAc by the transfer of uridine 5-monophosphate (from uridine 5-triphosphate), a reaction catalyzed by the N-terminal domain. This chain is Bifunctional protein GlmU, found in Bifidobacterium animalis subsp. lactis (strain AD011).